The sequence spans 285 residues: 1-deoxypentalenic acid 11-beta-hydroxylase (285 aa).

Arginine 117 contributes to the substrate binding site. Histidine 137 and aspartate 139 together coordinate Fe cation. Residues 137–139 (HQD) and tryptophan 153 contribute to the 2-oxoglutarate site. Arginine 188 serves as a coordination point for substrate. Histidine 226 provides a ligand contact to Fe cation. Positions 228 and 240 each coordinate 2-oxoglutarate.

It belongs to the PhyH family. It depends on Fe cation as a cofactor. L-ascorbate is required as a cofactor.

The enzyme catalyses 1-deoxypentalenate + 2-oxoglutarate + O2 = 1-deoxy-11beta-hydroxypentalenate + succinate + CO2. Its pathway is antibiotic biosynthesis; neopentalenolactone biosynthesis. Catalyzes the conversion of 1-deoxypentalenic acid to 11-beta-hydroxy-1-deoxypentalenic acid in the biosynthesis of neopentalenolactone antibiotic. This chain is 1-deoxypentalenic acid 11-beta-hydroxylase (ptlH), found in Streptomyces avermitilis (strain ATCC 31267 / DSM 46492 / JCM 5070 / NBRC 14893 / NCIMB 12804 / NRRL 8165 / MA-4680).